Reading from the N-terminus, the 506-residue chain is Maturase K (506 aa).

The protein belongs to the intron maturase 2 family. MatK subfamily.

It is found in the plastid. It localises to the chloroplast. In terms of biological role, usually encoded in the trnK tRNA gene intron. Probably assists in splicing its own and other chloroplast group II introns. This Melilotus albus (White sweet clover) protein is Maturase K.